Reading from the N-terminus, the 222-residue chain is Probable RNA 2'-phosphotransferase (222 aa).

The protein belongs to the KptA/TPT1 family.

In terms of biological role, removes the 2'-phosphate from RNA via an intermediate in which the phosphate is ADP-ribosylated by NAD followed by a presumed transesterification to release the RNA and generate ADP-ribose 1''-2''-cyclic phosphate (APPR&gt;P). May function as an ADP-ribosylase. This Haloarcula marismortui (strain ATCC 43049 / DSM 3752 / JCM 8966 / VKM B-1809) (Halobacterium marismortui) protein is Probable RNA 2'-phosphotransferase.